A 314-amino-acid polypeptide reads, in one-letter code: Triosephosphate isomerase, chloroplastic (314 aa).

Residues 1–22 (MAVASTSLASQLSGPKSLSQPY) are compositionally biased toward polar residues. Residues 1 to 25 (MAVASTSLASQLSGPKSLSQPYSGL) form a disordered region. The N-terminal 59 residues, 1 to 59 (MAVASTSLASQLSGPKSLSQPYSGLRRSCPKLDQSHSSLFQHLSLSSSSRKASRAVVAM), are a transit peptide targeting the chloroplast. Substrate contacts are provided by Asn-70 and Lys-72. Catalysis depends on His-154, which acts as the Electrophile. Glu-224 serves as the catalytic Proton acceptor.

It belongs to the triosephosphate isomerase family. In terms of assembly, homodimer.

It is found in the plastid. Its subcellular location is the chloroplast. The enzyme catalyses D-glyceraldehyde 3-phosphate = dihydroxyacetone phosphate. It participates in carbohydrate biosynthesis; Calvin cycle. This chain is Triosephosphate isomerase, chloroplastic (TPI), found in Fragaria ananassa (Strawberry).